The sequence spans 194 residues: dTTP/UTP pyrophosphatase (194 aa).

Residue D73 is the Proton acceptor of the active site.

Belongs to the Maf family. YhdE subfamily. A divalent metal cation serves as cofactor.

It localises to the cytoplasm. The catalysed reaction is dTTP + H2O = dTMP + diphosphate + H(+). It catalyses the reaction UTP + H2O = UMP + diphosphate + H(+). In terms of biological role, nucleoside triphosphate pyrophosphatase that hydrolyzes dTTP and UTP. May have a dual role in cell division arrest and in preventing the incorporation of modified nucleotides into cellular nucleic acids. In Clostridium botulinum (strain Okra / Type B1), this protein is dTTP/UTP pyrophosphatase.